The sequence spans 736 residues: Peroxisomal multifunctional enzyme type 2 (736 aa).

The (3R)-hydroxyacyl-CoA dehydrogenase stretch occupies residues 1 to 305 (MGSPLRFDGR…IEVLSKIDSE (305 aa)). NAD(+) is bound by residues 13 to 37 (LVTGAGAGLGRAYALAFAERGALVV), Leu-21, and Asp-40. Lys-46 is modified (N6-acetyllysine; alternate). Lys-46 bears the N6-succinyllysine; alternate mark. The residue at position 52 (Ser-52) is a Phosphoserine. N6-succinyllysine is present on residues Lys-57 and Lys-68. 75–76 (SV) serves as a coordination point for NAD(+). N6-succinyllysine is present on Lys-84. Asn-99 contributes to the NAD(+) binding site. Residue Ser-151 coordinates substrate. Tyr-164 (proton acceptor) is an active-site residue. NAD(+) is bound by residues 164 to 168 (YSAAK) and 196 to 199 (AGSR). Thr-265 bears the Phosphothreonine mark. Lys-275 carries the N6-succinyllysine modification. A phosphoserine mark is found at Ser-304 and Ser-309. Residues 322 to 622 (SGFAGAIGQK…AKTPSEGGKL (301 aa)) are enoyl-CoA hydratase 2. At Lys-356 the chain carries N6-succinyllysine. Residue 406-407 (HG) coordinates (3R)-3-hydroxydecanoyl-CoA. Position 424 is an N6-succinyllysine (Lys-424). (3R)-3-hydroxydecanoyl-CoA is bound by residues Lys-435, 510–515 (DWNPLH), Gly-533, and Phe-563. Residues 484 to 600 (IPNRPPDAVL…QETGDIVISN (117 aa)) form the MaoC-like domain. Position 565 is an N6-acetyllysine (Lys-565). Residues Lys-579 and Lys-663 each carry the N6-succinyllysine modification. The region spanning 624–736 (STFVFEEIGR…QMILKDYAKL (113 aa)) is the SCP2 domain. The residue at position 669 (Lys-669) is an N6-acetyllysine. Gln-706 is a binding site for substrate. Residue Lys-707 is modified to N6-acetyllysine. Gln-724 is a substrate binding site. Residue Lys-725 is modified to N6-succinyllysine. Positions 734–736 (AKL) match the Microbody targeting signal motif.

Belongs to the short-chain dehydrogenases/reductases (SDR) family. As to quaternary structure, homodimer. Present in many tissues with highest concentrations in liver, heart, prostate and testis.

The protein localises to the peroxisome. It carries out the reaction a (3R)-3-hydroxyacyl-CoA + NAD(+) = a 3-oxoacyl-CoA + NADH + H(+). The catalysed reaction is a (3R)-3-hydroxyacyl-CoA = a (2E)-enoyl-CoA + H2O. It catalyses the reaction (24R,25R)-3alpha,7alpha,12alpha,24-tetrahydroxy-5beta-cholestan-26-oyl-CoA = (24E)-3alpha,7alpha,12alpha-trihydroxy-5beta-cholest-24-en-26-oyl-CoA + H2O. The enzyme catalyses (2E)-octenoyl-CoA + H2O = (3R)-hydroxyoctanoyl-CoA. It carries out the reaction (3R)-hydroxyoctanoyl-CoA + NAD(+) = 3-oxooctanoyl-CoA + NADH + H(+). The catalysed reaction is (3R)-hydroxyhexadecanoyl-CoA + NAD(+) = 3-oxohexadecanoyl-CoA + NADH + H(+). It catalyses the reaction (2E)-hexadecenedioyl-CoA + H2O = (3R)-hydroxyhexadecanedioyl-CoA. The enzyme catalyses (3R)-hydroxyhexadecanedioyl-CoA + NAD(+) = 3-oxohexadecanedioyl-CoA + NADH + H(+). It carries out the reaction (3R)-hydroxyhexadecanoyl-CoA = (2E)-hexadecenoyl-CoA + H2O. The catalysed reaction is (3R)-3-hydroxydecanoyl-CoA = (2E)-decenoyl-CoA + H2O. It catalyses the reaction (3R)-3-hydroxydecanoyl-CoA + NAD(+) = 3-oxodecanoyl-CoA + NADH + H(+). The enzyme catalyses (24R,25R)-3alpha,7alpha,12alpha,24-tetrahydroxy-5beta-cholestan-26-oyl-CoA + NAD(+) = 3alpha,7alpha,12alpha-trihydroxy-24-oxo-5beta-cholestan-26-oyl-CoA + NADH + H(+). Its pathway is lipid metabolism; fatty acid beta-oxidation. Bifunctional enzyme acting on the peroxisomal fatty acid beta-oxidation pathway. Catalyzes two of the four reactions in fatty acid degradation: hydration of 2-enoyl-CoA (trans-2-enoyl-CoA) to produce (3R)-3-hydroxyacyl-CoA, and dehydrogenation of (3R)-3-hydroxyacyl-CoA to produce 3-ketoacyl-CoA (3-oxoacyl-CoA), which is further metabolized by SCPx. Can use straight-chain and branched-chain fatty acids, as well as bile acid intermediates as substrates. The protein is Peroxisomal multifunctional enzyme type 2 of Homo sapiens (Human).